The following is a 458-amino-acid chain: Bifunctional thioredoxin reductase/thioredoxin (458 aa).

Residues 1 to 321 are thioredoxin reductase; it reads MNTTPSAHET…LAEHAGSKAN (321 aa). FAD-binding positions include 19–22, 41–48, asparagine 57, and valine 90; these read SGPA and EGTSFGGA. Cysteine 142 and cysteine 145 are oxidised to a cystine. Positions 163, 182, 188, 245, and 265 each coordinate NADP(+). Residues aspartate 285 and 292–295 each bind FAD; that span reads RQAI. NADP(+) is bound at residue arginine 292. Residues 322–347 form a linker region; it reads ETTEETGDVDSTDTTDWSTAMTDAKN. The region spanning 341–455 is the Thioredoxin domain; it reads AMTDAKNAGV…LLRDLSDVVP (115 aa). A disulfide bridge connects residues cysteine 379 and cysteine 382.

In the N-terminal section; belongs to the class-II pyridine nucleotide-disulfide oxidoreductase family. As to quaternary structure, homodimer. Requires FAD as cofactor.

It localises to the cytoplasm. The enzyme catalyses [thioredoxin]-dithiol + NADP(+) = [thioredoxin]-disulfide + NADPH + H(+). The chain is Bifunctional thioredoxin reductase/thioredoxin (trxB/A) from Mycobacterium leprae (strain TN).